The chain runs to 384 residues: Histone acetyltransferase type B subunit 2 (384 aa).

WD repeat units lie at residues 156–196 (GHSA…SSIS), 203–243 (RHET…CIHA), 247–287 (AHTS…QPLH), 291–331 (GHSK…AEVP), and 348–384 (GHTS…PQPE).

The protein belongs to the WD repeat RBAP46/RBAP48/MSI1 family. In terms of assembly, component of the HAT-B complex.

It is found in the cytoplasm. The protein resides in the nucleus. Its function is as follows. Regulatory subunit of the histone acetylase B (HAT-B) complex. The complex acetylates histone H4 which is required for telomeric silencing. This chain is Histone acetyltransferase type B subunit 2 (HAT2), found in Encephalitozoon cuniculi (strain GB-M1) (Microsporidian parasite).